Consider the following 309-residue polypeptide: Taste receptor type 2 member 43 (309 aa).

A topological domain (extracellular) is located at residue Met-1. The chain crosses the membrane as a helical span at residues 2 to 22 (ITFLPIIFSSLVVVTFVIGNF). Residues 23–46 (ANGFIALVNSIEWFKRQKISFADQ) are Cytoplasmic-facing. Residues 47–67 (ILTALAVSRVGLLWVLLLNWY) form a helical membrane-spanning segment. The Extracellular segment spans residues 68–86 (STVLNPAFNSVEVRTTAYN). The helical transmembrane segment at 87-107 (IWAVINHFSNWLATTLSIFYL) threads the bilayer. At 108–126 (LKIANFSNFIFLHLKRRVK) the chain is on the cytoplasmic side. The chain crosses the membrane as a helical span at residues 127–147 (SVILVMLLGPLLFLACHLFVI). Residues 148-178 (NMNEIVRTKEFEGNMTWKIKLKSAMYFSNMT) are Extracellular-facing. 2 N-linked (GlcNAc...) asparagine glycosylation sites follow: Asn-161 and Asn-176. A helical membrane pass occupies residues 179–199 (VTMVANLVPFTLTLLSFMLLI). Over 200–229 (CSLCKHLKKMQLHGKGSQDPSTKVHIKALQ) the chain is Cytoplasmic. Residues 230–250 (TVISFLLLCAIYFLSIMISVW) form a helical membrane-spanning segment. The Extracellular portion of the chain corresponds to 251 to 259 (SFGSLENKP). Residues 260 to 280 (VFMFCKAIRFSYPSIHPFILI) form a helical membrane-spanning segment. The Cytoplasmic portion of the chain corresponds to 281 to 309 (WGNKKLKQTFLSVFWQMRYWVKGEKTSSP).

The protein belongs to the G-protein coupled receptor T2R family. As to expression, expressed in subsets of taste receptor cells of the tongue and exclusively in gustducin-positive cells. Expressed in airway epithelia.

It is found in the membrane. Its subcellular location is the cell projection. It localises to the cilium membrane. Functionally, gustducin-coupled receptor immplicated in the perception of bitter compounds in the oral cavity and the gastrointestinal tract. Signals through PLCB2 and the calcium-regulated cation channel TRPM5. Activated by the sulfonyl amide sweeteners saccharin and acesulfame K. In airway epithelial cells, binding of bitter compounds increases the intracellular calcium ion concentration and stimulates ciliary beat frequency. May act as chemosensory receptors in airway epithelial cells to detect and eliminate potential noxious agents from the airways. The protein is Taste receptor type 2 member 43 (TAS2R43) of Homo sapiens (Human).